The sequence spans 357 residues: Phosphoserine aminotransferase (357 aa).

R41 lines the L-glutamate pocket. Pyridoxal 5'-phosphate-binding positions include G76–T77, W102, T152, D171, and Q194. At K195 the chain carries N6-(pyridoxal phosphate)lysine. A pyridoxal 5'-phosphate-binding site is contributed by N235 to T236.

The protein belongs to the class-V pyridoxal-phosphate-dependent aminotransferase family. SerC subfamily. In terms of assembly, homodimer. The cofactor is pyridoxal 5'-phosphate.

The protein resides in the cytoplasm. It catalyses the reaction O-phospho-L-serine + 2-oxoglutarate = 3-phosphooxypyruvate + L-glutamate. The enzyme catalyses 4-(phosphooxy)-L-threonine + 2-oxoglutarate = (R)-3-hydroxy-2-oxo-4-phosphooxybutanoate + L-glutamate. It functions in the pathway amino-acid biosynthesis; L-serine biosynthesis; L-serine from 3-phospho-D-glycerate: step 2/3. Functionally, catalyzes the reversible conversion of 3-phosphohydroxypyruvate to phosphoserine and of 3-hydroxy-2-oxo-4-phosphonooxybutanoate to phosphohydroxythreonine. The chain is Phosphoserine aminotransferase from Limosilactobacillus fermentum (strain NBRC 3956 / LMG 18251) (Lactobacillus fermentum).